Consider the following 243-residue polypeptide: Protein unc-119 homolog B (243 aa).

Residues 1-21 (MNSQSSRNETAATAVNGSDSA) show a composition bias toward polar residues. The disordered stretch occupies residues 1–49 (MNSQSSRNETAATAVNGSDSAAASRDHKSGGGVLKRLKSRRNQVDRRPV). Tyr-134 contributes to the tetradecanoate binding site.

It belongs to the PDE6D/unc-119 family. As to expression, detected in embryo. Detected in larvae four days after fertilization, in retina and neural tissues (at protein level). Detected in embryos at the sphere stage, during gastrulation, somitogenesis and in swimming larvae, both within and outside of the developing nervous system. Detected in adults.

The protein localises to the cell projection. The protein resides in the cilium. Myristoyl-binding protein that acts as a cargo adapter: specifically binds the myristoyl moiety of a subset of N-terminally myristoylated proteins and is required for their localization. Plays a key role in localization of proteins to the primary cilium membrane. This is Protein unc-119 homolog B (unc119b) from Danio rerio (Zebrafish).